A 950-amino-acid polypeptide reads, in one-letter code: Valine--tRNA ligase, mitochondrial (950 aa).

Residues 1-90 constitute a mitochondrion transit peptide; sequence MFHFQRSFSS…ITIQDALARF (90 aa). The short motif at 67–77 is the 'HIGH' region element; that stretch reads PNITGKLHIGH. The 'KMSKS' region motif lies at 556–560; the sequence is KMSKS. Lysine 559 contacts ATP.

It belongs to the class-I aminoacyl-tRNA synthetase family.

It is found in the mitochondrion. The catalysed reaction is tRNA(Val) + L-valine + ATP = L-valyl-tRNA(Val) + AMP + diphosphate. This Schizosaccharomyces pombe (strain 972 / ATCC 24843) (Fission yeast) protein is Valine--tRNA ligase, mitochondrial (vas1).